We begin with the raw amino-acid sequence, 887 residues long: Transportin-2 (887 aa).

HEAT repeat units lie at residues 9–36, 41–79, 88–121, 127–164, 171–201, 214–241, 253–280, 296–386, 394–422, 434–461, 475–508, 516–549, 557–595, 603–654, 665–696, 704–737, 745–780, 788–821, 830–861, and 864–884; these read GLQQ…DKLK, FPDF…AHYQ, FIKQ…KGEL, LLPQ…LDSD, NIMI…QFIM, FIEH…VMLL, HSII…FWLT, VQLI…LANV, HLLP…GAIA, PELI…TLSR, LKPL…EEEA, LSYI…ADSV, EYIQ…TALQ, EPVY…GLGG, IMTL…KACF, AEFM…MQMG, QMVL…YVCP, QQFI…IGVN, IFFC…KDQV, and ENWQ…LAAF. The region spanning 31–99 is the Importin N-terminal domain; that stretch reads VQDKLKQLNQ…KQECLNNIGD (69 aa). A disordered region spans residues 344 to 363; that stretch reads TLTHEAERPDSSEDAEDDDD. Lysine 852 bears the N6-acetyllysine mark.

The protein belongs to the importin beta family. Importin beta-2 subfamily.

The protein resides in the cytoplasm. It localises to the nucleus. In terms of biological role, probably functions in nuclear protein import as nuclear transport receptor. Serves as receptor for nuclear localization signals (NLS) in cargo substrates. Is thought to mediate docking of the importin/substrate complex to the nuclear pore complex (NPC) through binding to nucleoporin and the complex is subsequently translocated through the pore by an energy requiring, Ran-dependent mechanism. At the nucleoplasmic side of the NPC, Ran binds to the importin, the importin/substrate complex dissociates and importin is re-exported from the nucleus to the cytoplasm where GTP hydrolysis releases Ran. The directionality of nuclear import is thought to be conferred by an asymmetric distribution of the GTP- and GDP-bound forms of Ran between the cytoplasm and nucleus. This Mus musculus (Mouse) protein is Transportin-2 (Tnpo2).